Here is a 931-residue protein sequence, read N- to C-terminus: Myocardin-related transcription factor A (931 aa).

The interval 1–256 (MPPLKSPAAF…KQDRGAPPMD (256 aa)) is mediates interaction with SCAI and ACTB. At S6 the chain carries Phosphoserine. The intervening spacer sequence 1 stretch occupies residues 6 to 23 (SPAAFHEQRRSLERARTE). One copy of the RPEL 1 repeat lies at 24 to 49 (DYLKRKIRSRPERSELVRMHILEETS). The Bipartite Nuclear localization signal signature appears at 27-65 (KRKIRSRPERSELVRMHILEETSAEPSLQAKQLKLKRAR). The tract at residues 50–67 (AEPSLQAKQLKLKRARLA) is intervening spacer sequence 2. Residues 68-93 (DDLNEKIAQRPGPMELVEKNILPVES) form an RPEL 2 repeat. Disordered regions lie at residues 110–256 (ADSS…PPMD) and 290–344 (PAPP…GALP). 3 positions are modified to phosphoserine: S124, S139, and S156. The segment covering 151–162 (SATSASPTQVVS) has biased composition (polar residues). Pro residues predominate over residues 180–189 (PPLPPPPLLP). Residues 191–215 (SLTNGTTIPTAKSTPTLIKQSQPKS) show a composition bias toward polar residues. The segment covering 216–231 (ASEKSQRSKKAKELKP) has biased composition (basic and acidic residues). T305 is subject to Phosphothreonine. Residues S310 and S312 each carry the phosphoserine modification. Residues 310–320 (SLSTTNSSSSS) show a composition bias toward low complexity. Position 313 is a phosphothreonine (T313). Phosphoserine is present on residues S317, S320, and S333. The 35-residue stretch at 347 to 381 (LDDMKVAELKQELKLRSLPVSGTKTELIERLRAYQ) folds into the SAP domain. Phosphoserine is present on residues S385 and S446. Residues 444 to 476 (FGSTGSTPPVSPTPSERSLLSTGDENSTPGDTF) are disordered. Position 447 is a phosphothreonine (T447). S449 is subject to Phosphoserine. T450 is modified (phosphothreonine). S454 bears the Phosphoserine mark. Residue T456 is modified to Phosphothreonine. Position 458 is a phosphoserine (S458). The span at 459–473 (ERSLLSTGDENSTPG) shows a compositional bias: polar residues. 4 positions are modified to phosphoserine: S482, S492, S507, and S511. The stretch at 515 to 563 (RAELEGRDKDQMLQEKDKQIEALTRMLRQKQQLVERLKLQLEQEKRAQQ) forms a coiled coil. Disordered stretches follow at residues 558-577 (EKRAQQPAPAPAPLGTPVKQ), 674-746 (KNAD…SSSQ), and 763-816 (ADFK…RLED). The segment covering 678 to 694 (SPGLSSGSPQQPSSQPG) has biased composition (low complexity). A phosphoserine mark is found at S685, S691, and S695. The segment covering 732-746 (MSQQPKQQENGSSSQ) has biased composition (polar residues). Basic and acidic residues predominate over residues 763-778 (ADFKEPPSLPGKEKPS). Positions 784–799 (GSPLAAQPSPSAELPQ) are enriched in low complexity. Phosphoserine occurs at positions 792, 807, and 859.

As to quaternary structure, interacts with SRF, forming the SRF-MRTFA nuclear complex which binds the 5'-CArG-3' consensus motif (CArG box) on DNA via SRF. Interacts (via RPEL repeats) with globular actin (G-actin), thereby regulating its subcellular location and activity of the complex formed with SRF. Either forms a trivalent (by binding three G-actin monomers) or pentavalent (by binding five G-actin monomers) complex with G-actin. Forms a nuclear ternary complex with SCAI and SRF, leading to suppress MRTFA-induced SRF transcriptional activity. Interacts with beta-actin (ACTB); interaction with ACTB prevents interaction with SCAI. Interacts with MRTFB. In terms of processing, phosphorylation at Ser-6 by Erk inhibits binding of globular actin (G-actin), unmasking the nuclear localization signal (NLS) and promoting nuclear import. Ubiquitously expressed, has been detected in lung, placenta, small intestine, liver, kidney, spleen, thymus, colon, muscle, heart and brain. Expressed in peripheral blood mononuclear cells (at protein level).

It is found in the cytoplasm. It localises to the nucleus. Its function is as follows. Transcription coactivator that associates with the serum response factor (SRF) transcription factor to control expression of genes regulating the cytoskeleton during development, morphogenesis and cell migration. The SRF-MRTFA complex activity responds to Rho GTPase-induced changes in cellular globular actin (G-actin) concentration, thereby coupling cytoskeletal gene expression to cytoskeletal dynamics. MRTFA binds G-actin via its RPEL repeats, regulating activity of the MRTFA-SRF complex. Activity is also regulated by filamentous actin (F-actin) in the nucleus. In Homo sapiens (Human), this protein is Myocardin-related transcription factor A.